The primary structure comprises 238 residues: MSQSLIVALDFPGKQDVEQFLRHFEGEELFVKVGMELFYKEGPAIITYLKEKGHKIFLDLKLHDIPNTVKSAMRSLASLDVDMVNVHAAGGSSMMKAAIEGLEEGKQEGKERPICIAVTQLTSTSEAMMKKEIGIEKTLEEAVAHYAKLTKESGLDGVVCSTLEVPKLREVCGDEFVTVTPGIRLASDDVNDQVRVATPKRARELGSSYIVVGRSITKAENPLEAYKTVKQQWEGVTV.

Substrate-binding positions include Asp10, Lys32, 59-68, Thr122, Arg184, Gln193, Gly213, and Arg214; that span reads DLKLHDIPNT. Lys61 serves as the catalytic Proton donor.

This sequence belongs to the OMP decarboxylase family. Type 1 subfamily. Homodimer.

It catalyses the reaction orotidine 5'-phosphate + H(+) = UMP + CO2. It functions in the pathway pyrimidine metabolism; UMP biosynthesis via de novo pathway; UMP from orotate: step 2/2. Functionally, catalyzes the decarboxylation of orotidine 5'-monophosphate (OMP) to uridine 5'-monophosphate (UMP). The chain is Orotidine 5'-phosphate decarboxylase from Bacillus cereus (strain AH187).